The sequence spans 337 residues: PHD finger protein 11 (337 aa).

A C2HC pre-PHD-type zinc finger spans residues 42–78 (KRICALCPKDLECSVLYFAQSENIAAHENCLLYSSAL). Residues 108-160 (LKCTFCGKKGATVGCDLKSCFKNYHFFCAKNDHAVLQADGRTGIYKVFCQQHA) form a PHD-type zinc finger.

As to quaternary structure, interacts with BRCA1 and RELA.

Its subcellular location is the nucleus. In terms of biological role, positive regulator of Th1-type cytokine gene expression. The chain is PHD finger protein 11 (PHF11) from Bos taurus (Bovine).